Reading from the N-terminus, the 298-residue chain is 4-hydroxy-tetrahydrodipicolinate synthase (298 aa).

Threonine 51 contributes to the pyruvate binding site. Tyrosine 140 (proton donor/acceptor) is an active-site residue. The active-site Schiff-base intermediate with substrate is the lysine 168. A pyruvate-binding site is contributed by isoleucine 210.

The protein belongs to the DapA family. In terms of assembly, homotetramer; dimer of dimers.

The protein localises to the cytoplasm. It catalyses the reaction L-aspartate 4-semialdehyde + pyruvate = (2S,4S)-4-hydroxy-2,3,4,5-tetrahydrodipicolinate + H2O + H(+). The protein operates within amino-acid biosynthesis; L-lysine biosynthesis via DAP pathway; (S)-tetrahydrodipicolinate from L-aspartate: step 3/4. Its function is as follows. Catalyzes the condensation of (S)-aspartate-beta-semialdehyde [(S)-ASA] and pyruvate to 4-hydroxy-tetrahydrodipicolinate (HTPA). This is 4-hydroxy-tetrahydrodipicolinate synthase from Acidovorax sp. (strain JS42).